The primary structure comprises 181 residues: Crossover junction endodeoxyribonuclease RuvC (181 aa).

Active-site residues include Asp-7, Glu-67, and Asp-139. 3 residues coordinate Mg(2+): Asp-7, Glu-67, and Asp-139.

This sequence belongs to the RuvC family. As to quaternary structure, homodimer which binds Holliday junction (HJ) DNA. The HJ becomes 2-fold symmetrical on binding to RuvC with unstacked arms; it has a different conformation from HJ DNA in complex with RuvA. In the full resolvosome a probable DNA-RuvA(4)-RuvB(12)-RuvC(2) complex forms which resolves the HJ. Mg(2+) is required as a cofactor.

The protein resides in the cytoplasm. It carries out the reaction Endonucleolytic cleavage at a junction such as a reciprocal single-stranded crossover between two homologous DNA duplexes (Holliday junction).. In terms of biological role, the RuvA-RuvB-RuvC complex processes Holliday junction (HJ) DNA during genetic recombination and DNA repair. Endonuclease that resolves HJ intermediates. Cleaves cruciform DNA by making single-stranded nicks across the HJ at symmetrical positions within the homologous arms, yielding a 5'-phosphate and a 3'-hydroxyl group; requires a central core of homology in the junction. The consensus cleavage sequence is 5'-(A/T)TT(C/G)-3'. Cleavage occurs on the 3'-side of the TT dinucleotide at the point of strand exchange. HJ branch migration catalyzed by RuvA-RuvB allows RuvC to scan DNA until it finds its consensus sequence, where it cleaves and resolves the cruciform DNA. In Ralstonia pickettii (strain 12J), this protein is Crossover junction endodeoxyribonuclease RuvC.